The following is a 98-amino-acid chain: Trp operon repressor homolog (98 aa).

Residues 59–82 mediate DNA binding; it reads QRQVSQMLGVGVATITRGSNELKA.

It belongs to the TrpR family. As to quaternary structure, homodimer.

The protein resides in the cytoplasm. Functionally, this protein is an aporepressor. When complexed with L-tryptophan it binds the operator region of the trp operon and prevents the initiation of transcription. The polypeptide is Trp operon repressor homolog (Vibrio atlanticus (strain LGP32) (Vibrio splendidus (strain Mel32))).